We begin with the raw amino-acid sequence, 436 residues long: Cysteine--tRNA ligase (436 aa).

Residue Cys-24 participates in Zn(2+) binding. The 'HIGH' region motif lies at 26–36; it reads PTVYNHIHIGN. Zn(2+) is bound by residues Cys-202, His-227, and Glu-231. The 'KMSKS' region signature appears at 259-263; that stretch reads KMSKS. Lys-262 serves as a coordination point for ATP.

Belongs to the class-I aminoacyl-tRNA synthetase family. As to quaternary structure, monomer. Requires Zn(2+) as cofactor.

It is found in the cytoplasm. It carries out the reaction tRNA(Cys) + L-cysteine + ATP = L-cysteinyl-tRNA(Cys) + AMP + diphosphate. The sequence is that of Cysteine--tRNA ligase from Ureaplasma parvum serovar 3 (strain ATCC 700970).